Here is a 498-residue protein sequence, read N- to C-terminus: Lysine--tRNA ligase (498 aa).

The Mg(2+) site is built by Glu-408 and Glu-415.

This sequence belongs to the class-II aminoacyl-tRNA synthetase family. As to quaternary structure, homodimer. Requires Mg(2+) as cofactor.

Its subcellular location is the cytoplasm. The catalysed reaction is tRNA(Lys) + L-lysine + ATP = L-lysyl-tRNA(Lys) + AMP + diphosphate. The chain is Lysine--tRNA ligase from Listeria monocytogenes serovar 1/2a (strain ATCC BAA-679 / EGD-e).